Reading from the N-terminus, the 232-residue chain is Homeobox protein Rhox13 (232 aa).

The segment at 45–114 (QAAVASSHDS…EAAAPSVAAV (70 aa)) is disordered. The segment covering 68–105 (SDSESESDSESESDSSDSSDESDDDSSTSDEDTSDPEE) has biased composition (acidic residues). The segment at residues 148-207 (RRGPPFHFAQWQVEEMESLFEETQYPDLLTRGELARTLNVPEVKVKVWFTNRRAKQRKIE) is a DNA-binding region (homeobox).

The protein belongs to the paired-like homeobox family.

The protein resides in the nucleus. Its function is as follows. Probable transcription factor. The protein is Homeobox protein Rhox13 of Mus musculus (Mouse).